The chain runs to 223 residues: Deoxyribose-phosphate aldolase (223 aa).

The active-site Proton donor/acceptor is the aspartate 89. Residue lysine 152 is the Schiff-base intermediate with acetaldehyde of the active site. Lysine 181 (proton donor/acceptor) is an active-site residue.

The protein belongs to the DeoC/FbaB aldolase family. DeoC type 1 subfamily.

The protein localises to the cytoplasm. The enzyme catalyses 2-deoxy-D-ribose 5-phosphate = D-glyceraldehyde 3-phosphate + acetaldehyde. The protein operates within carbohydrate degradation; 2-deoxy-D-ribose 1-phosphate degradation; D-glyceraldehyde 3-phosphate and acetaldehyde from 2-deoxy-alpha-D-ribose 1-phosphate: step 2/2. In terms of biological role, catalyzes a reversible aldol reaction between acetaldehyde and D-glyceraldehyde 3-phosphate to generate 2-deoxy-D-ribose 5-phosphate. The protein is Deoxyribose-phosphate aldolase of Bacillus cereus (strain Q1).